We begin with the raw amino-acid sequence, 579 residues long: MLGTKFILNIFKNKFNNLSTRFIKYVIKSYKRTCPHISDFEPFSSMYYYTGLHNYRTFYLLIKINEIFNINKYKQIYIIVNTDKYDFTTDDIETNKKNRIYLDQRVDIKIRQCDEVIRINLFTTKLTKKVHIGEIKIDINASIISKCFPKNEWFVCIKDGQEVCKVQLSFYKTQKYACPSECMFIHDGLEIWKDKSKSGSTKKIDINNIHKNFDDNDEHLAMIDIDTDINDISLIQKLKLISFVLEQEICVFDFYAYVLKYMYAKEIMGEWFLCFLCFKNNKDQEEINIETIIERNIHRDINIPMLNIQRIVVDKRNNTNANIIYTYQDEKYTLSIHSKKNLYYIIDAITIFTNDLKILKESFGDELEYRKNIIMKENTMKKLMGKRRLSSPRFRKNLPKSTHKMIKEMYDEQDCSHDVKESNTQFFENDMKTNEIKNDNIQTDEIKNDNIQTDEIKNDHIQTDEIKNDNIQTDEIKNDNIQTDEIKNDHIQTDEIKNDNIQTDEIKNDNIQTDEIKNDHIQTDEINNDHIQTDEIKNDHIQTDEIKNDHIQTDEIKNDINTSNEIFFKAQLENTIQNI.

Residues 52-84 (LHNYRTFYLLIKINEIFNINKYKQIYIIVNTDK) form the C2 domain. 11 tandem repeats follow at residues 442–451 (QTDEIKNDNI), 452–461 (QTDEIKNDHI), 462–471 (QTDEIKNDNI), 472–481 (QTDEIKNDNI), 482–491 (QTDEIKNDHI), 492–501 (QTDEIKNDNI), 502–511 (QTDEIKNDNI), 522–531 (QTDEINNDHI), 532–541 (QTDEIKNDHI), 542–551 (QTDEIKNDHI), and 552–561 (QTDEIKNDIN). The 12 X 10 AA tandem repeat of Q-T-E-I-[K/N]-N-D-[H/N/I][I/N] stretch occupies residues 442 to 561 (QTDEIKNDNI…QTDEIKNDIN (120 aa)).

The protein localises to the cytoplasmic vesicle. Its subcellular location is the secretory vesicle. It localises to the rhoptry membrane. It is found in the cell membrane. The protein resides in the host cell membrane. Its function is as follows. Plays an important role in rhoptry physiology and thus is essential for merozoite invasion of host erythrocytes. This is Rhoptry surface protein CERLI2 from Plasmodium falciparum (isolate 3D7).